A 457-amino-acid chain; its full sequence is Argininosuccinate lyase (457 aa).

The protein belongs to the lyase 1 family. Argininosuccinate lyase subfamily.

It localises to the cytoplasm. It catalyses the reaction 2-(N(omega)-L-arginino)succinate = fumarate + L-arginine. It participates in amino-acid biosynthesis; L-arginine biosynthesis; L-arginine from L-ornithine and carbamoyl phosphate: step 3/3. In Salmonella arizonae (strain ATCC BAA-731 / CDC346-86 / RSK2980), this protein is Argininosuccinate lyase.